A 224-amino-acid polypeptide reads, in one-letter code: ATP-dependent dethiobiotin synthetase BioD (224 aa).

Position 18 (threonine 18) interacts with Mg(2+). Residue lysine 39 is part of the active site. Serine 43 lines the substrate pocket. Mg(2+)-binding residues include aspartate 56 and glutamate 117. ATP contacts are provided by residues aspartate 56, 117-120 (EGVG), and 177-178 (NE).

The protein belongs to the dethiobiotin synthetase family. Homodimer. Mg(2+) is required as a cofactor.

It localises to the cytoplasm. It catalyses the reaction (7R,8S)-7,8-diammoniononanoate + CO2 + ATP = (4R,5S)-dethiobiotin + ADP + phosphate + 3 H(+). It functions in the pathway cofactor biosynthesis; biotin biosynthesis; biotin from 7,8-diaminononanoate: step 1/2. Its function is as follows. Catalyzes a mechanistically unusual reaction, the ATP-dependent insertion of CO2 between the N7 and N8 nitrogen atoms of 7,8-diaminopelargonic acid (DAPA, also called 7,8-diammoniononanoate) to form a ureido ring. This is ATP-dependent dethiobiotin synthetase BioD from Xanthomonas euvesicatoria pv. vesicatoria (strain 85-10) (Xanthomonas campestris pv. vesicatoria).